The chain runs to 423 residues: UDP-N-acetylglucosamine 1-carboxyvinyltransferase 1 (423 aa).

23–24 (KN) serves as a coordination point for phosphoenolpyruvate. UDP-N-acetyl-alpha-D-glucosamine is bound at residue arginine 96. The active-site Proton donor is cysteine 120. Cysteine 120 bears the 2-(S-cysteinyl)pyruvic acid O-phosphothioketal mark. Positions 309 and 331 each coordinate UDP-N-acetyl-alpha-D-glucosamine.

Belongs to the EPSP synthase family. MurA subfamily.

The protein localises to the cytoplasm. The catalysed reaction is phosphoenolpyruvate + UDP-N-acetyl-alpha-D-glucosamine = UDP-N-acetyl-3-O-(1-carboxyvinyl)-alpha-D-glucosamine + phosphate. Its pathway is cell wall biogenesis; peptidoglycan biosynthesis. Cell wall formation. Adds enolpyruvyl to UDP-N-acetylglucosamine. This chain is UDP-N-acetylglucosamine 1-carboxyvinyltransferase 1, found in Streptococcus pyogenes serotype M1.